The following is a 993-amino-acid chain: Glycogen phosphorylase 2 (993 aa).

Residues 1-82 (MEEKRSTNSP…SNQSEDPATQ (82 aa)) form a disordered region. The segment covering 19-48 (RSGSITSATSHPPRSNSNPKLVAKHQQQLY) has biased composition (polar residues). The segment covering 58-77 (EQQNQQPQQQQQKQTSNQSE) has biased composition (low complexity). Lysine 763 bears the N6-(pyridoxal phosphate)lysine mark. A compositionally biased stretch (polar residues) spans 962 to 981 (VISGGDKTNNTLKPKQTTKG). The disordered stretch occupies residues 962 to 993 (VISGGDKTNNTLKPKQTTKGFNIGGQPGNPTN). Residues 983 to 993 (NIGGQPGNPTN) are compositionally biased toward gly residues.

Belongs to the glycogen phosphorylase family. As to quaternary structure, homodimer. Pyridoxal 5'-phosphate serves as cofactor. The N-terminus is blocked. Post-translationally, enzyme activity requires processing of the 113 kDa peptide to an enzymatically active 106 kDa form of the protein. Processing would occur near the middle of the Gln-rich repetitive element.

It catalyses the reaction [(1-&gt;4)-alpha-D-glucosyl](n) + phosphate = [(1-&gt;4)-alpha-D-glucosyl](n-1) + alpha-D-glucose 1-phosphate. Functionally, phosphorylase is an important allosteric enzyme in carbohydrate metabolism. Enzymes from different sources differ in their regulatory mechanisms and in their natural substrates. However, all known phosphorylases share catalytic and structural properties. The sequence is that of Glycogen phosphorylase 2 (glpD) from Dictyostelium discoideum (Social amoeba).